Reading from the N-terminus, the 427-residue chain is Tol-Pal system protein TolB (427 aa).

The N-terminal stretch at 1–23 (MKLIARLMSMCAVLFFAINSAYA) is a signal peptide.

The protein belongs to the TolB family. In terms of assembly, the Tol-Pal system is composed of five core proteins: the inner membrane proteins TolA, TolQ and TolR, the periplasmic protein TolB and the outer membrane protein Pal. They form a network linking the inner and outer membranes and the peptidoglycan layer.

The protein resides in the periplasm. In terms of biological role, part of the Tol-Pal system, which plays a role in outer membrane invagination during cell division and is important for maintaining outer membrane integrity. The sequence is that of Tol-Pal system protein TolB from Actinobacillus succinogenes (strain ATCC 55618 / DSM 22257 / CCUG 43843 / 130Z).